We begin with the raw amino-acid sequence, 167 residues long: MPILLKKQVSEVSCYAITVLGILCLILFTILVVVTCKWYYAFPYFSKVCPDEWIGYNSKCYYFTINETNWNDSKKLCDVMDSSLIRFDNIETLNFVSRYGKGSYWIDINQNRKIPGINFSLYYEQGVNDICLLFDTSNIIEMSCIFHERTICVKEDRYTHWYTEYMR.

The 104-residue stretch at 49–152 (CPDEWIGYNS…SCIFHERTIC (104 aa)) folds into the C-type lectin domain. Disulfide bonds link C77–C152 and C131–C144.

This Vertebrata (FPV) protein is Putative C-type lectin protein FPV008/FPV253.